The primary structure comprises 728 residues: Catalase-peroxidase 2 (728 aa).

The interval 1-20 (MSNEGKCPFNHGKRNGTTNR) is disordered. The tryptophyl-tyrosyl-methioninium (Trp-Tyr) (with M-240) cross-link spans 91 to 214 (WHSAGTYRTG…LAAVQMGLIY (124 aa)). His92 (proton acceptor) is an active-site residue. Residues 214–240 (YVNPEGPNGNPDPLASARDIRETFARM) constitute a cross-link (tryptophyl-tyrosyl-methioninium (Tyr-Met) (with W-91)). Residue His255 participates in heme b binding. The disordered stretch occupies residues 335–355 (AHQWQPKGGAGADSVPDPFEP).

The protein belongs to the peroxidase family. Peroxidase/catalase subfamily. In terms of assembly, homodimer or homotetramer. It depends on heme b as a cofactor. Formation of the three residue Trp-Tyr-Met cross-link is important for the catalase, but not the peroxidase activity of the enzyme.

It carries out the reaction H2O2 + AH2 = A + 2 H2O. The catalysed reaction is 2 H2O2 = O2 + 2 H2O. In terms of biological role, bifunctional enzyme with both catalase and broad-spectrum peroxidase activity. The sequence is that of Catalase-peroxidase 2 from Burkholderia cenocepacia (strain HI2424).